The chain runs to 318 residues: L-lactate dehydrogenase (318 aa).

Positions 16, 37, and 69 each coordinate NAD(+). Residues glutamine 86, arginine 92, and 124 to 127 contribute to the substrate site; that span reads NPVD. NAD(+) contacts are provided by residues 122 to 124 and serine 147; that span reads ASN. A substrate-binding site is contributed by 152 to 155; it reads DSAR. Histidine 179 functions as the Proton acceptor in the catalytic mechanism. The residue at position 223 (tyrosine 223) is a Phosphotyrosine. Substrate is bound at residue threonine 232.

Belongs to the LDH/MDH superfamily. LDH family. Homotetramer.

It is found in the cytoplasm. It carries out the reaction (S)-lactate + NAD(+) = pyruvate + NADH + H(+). It functions in the pathway fermentation; pyruvate fermentation to lactate; (S)-lactate from pyruvate: step 1/1. In terms of biological role, catalyzes the conversion of lactate to pyruvate. The chain is L-lactate dehydrogenase from Mycoplasma mycoides subsp. mycoides SC (strain CCUG 32753 / NCTC 10114 / PG1).